Here is a 624-residue protein sequence, read N- to C-terminus: uncharacterized protein (624 aa).

The tract at residues 108-138 (PTAWSGMESDSTASERSLPQRTDTTSVSSQY) is disordered. S112 is subject to Phosphoserine. Residues 115-138 (ESDSTASERSLPQRTDTTSVSSQY) show a composition bias toward polar residues. S205 bears the Phosphoserine mark. Disordered stretches follow at residues 217–236 (LMESSGEKERNGNQELPGTR) and 305–329 (KRECIKLASSPSRMETESSEEPVSE).

This is an uncharacterized protein from Rattus norvegicus (Rat).